We begin with the raw amino-acid sequence, 600 residues long: CDK5RAP1-like protein (600 aa).

The segment at 45-66 (LSSAAHPPPPPPRRLARSGPSR) is disordered. The MTTase N-terminal domain maps to 93 to 222 (GRIYHETYGC…LPRLLQEVDY (130 aa)). Residues Cys102, Cys139, Cys185, Cys260, Cys264, and Cys267 each coordinate [4Fe-4S] cluster. Residues 246-501 (SDNSVTAFVS…ISTFRETTAK (256 aa)) form the Radical SAM core domain. Residues 504–580 (DSQVGTVQLV…TASLSGDVIA (77 aa)) enclose the TRAM domain.

Belongs to the methylthiotransferase family. MiaB subfamily. [4Fe-4S] cluster serves as cofactor.

Potential regulator of CDK5 activity. In Oryza sativa subsp. japonica (Rice), this protein is CDK5RAP1-like protein.